The following is a 363-amino-acid chain: GTPase Obg (363 aa).

In terms of domain architecture, Obg spans 1-159 (MKFIDEAKIY…LELRLELRVL (159 aa)). The OBG-type G domain occupies 160 to 338 (ADVGLLGLPN…LIYAISEALE (179 aa)). Residues 166 to 173 (GLPNAGKS), 191 to 195 (FTTLH), 213 to 216 (DVPG), 284 to 287 (NKLD), and 319 to 321 (AAI) contribute to the GTP site. 2 residues coordinate Mg(2+): S173 and T193. Positions 342-363 (RPEIGDLDDNDEDSDEIIRDTE) are disordered. Positions 346-356 (GDLDDNDEDSD) are enriched in acidic residues.

It belongs to the TRAFAC class OBG-HflX-like GTPase superfamily. OBG GTPase family. As to quaternary structure, monomer. Mg(2+) is required as a cofactor.

It is found in the cytoplasm. In terms of biological role, an essential GTPase which binds GTP, GDP and possibly (p)ppGpp with moderate affinity, with high nucleotide exchange rates and a fairly low GTP hydrolysis rate. Plays a role in control of the cell cycle, stress response, ribosome biogenesis and in those bacteria that undergo differentiation, in morphogenesis control. The protein is GTPase Obg of Dechloromonas aromatica (strain RCB).